The following is a 205-amino-acid chain: High frequency lysogenization protein HflD homolog (205 aa).

Belongs to the HflD family.

It is found in the cytoplasm. The protein localises to the cell inner membrane. The sequence is that of High frequency lysogenization protein HflD homolog from Shewanella pealeana (strain ATCC 700345 / ANG-SQ1).